Here is a 429-residue protein sequence, read N- to C-terminus: Threonine synthase (429 aa).

K108 carries the post-translational modification N6-(pyridoxal phosphate)lysine.

It belongs to the threonine synthase family. Pyridoxal 5'-phosphate is required as a cofactor.

The enzyme catalyses O-phospho-L-homoserine + H2O = L-threonine + phosphate. It functions in the pathway amino-acid biosynthesis; L-threonine biosynthesis; L-threonine from L-aspartate: step 5/5. Its function is as follows. Catalyzes the gamma-elimination of phosphate from L-phosphohomoserine and the beta-addition of water to produce L-threonine. The chain is Threonine synthase (thrC) from Buchnera aphidicola subsp. Acyrthosiphon pisum (strain APS) (Acyrthosiphon pisum symbiotic bacterium).